A 322-amino-acid polypeptide reads, in one-letter code: Sideroflexin fsf1 (322 aa).

4 helical membrane-spanning segments follow: residues 143–163, 175–195, 229–249, and 269–289; these read SYIY…KIVP, VLGR…NVFL, TALS…LVLM, and LGLI…VFPA.

It belongs to the sideroflexin family.

The protein localises to the mitochondrion membrane. Its function is as follows. Mitochondrial amino-acid transporter that mediates transport of serine into mitochondria. This is Sideroflexin fsf1 from Schizosaccharomyces pombe (strain 972 / ATCC 24843) (Fission yeast).